The following is a 144-amino-acid chain: Small ribosomal subunit protein uS19 (144 aa).

This sequence belongs to the universal ribosomal protein uS19 family.

Protein S19 forms a complex with S13 that binds strongly to the 16S ribosomal RNA. This is Small ribosomal subunit protein uS19 (rps19) from Aeropyrum pernix (strain ATCC 700893 / DSM 11879 / JCM 9820 / NBRC 100138 / K1).